The sequence spans 309 residues: Ribonuclease Z (309 aa).

Residues His-63, His-65, Asp-67, His-68, His-145, Asp-216, and His-274 each coordinate Zn(2+). Asp-67 serves as the catalytic Proton acceptor.

Belongs to the RNase Z family. Homodimer. It depends on Zn(2+) as a cofactor.

The enzyme catalyses Endonucleolytic cleavage of RNA, removing extra 3' nucleotides from tRNA precursor, generating 3' termini of tRNAs. A 3'-hydroxy group is left at the tRNA terminus and a 5'-phosphoryl group is left at the trailer molecule.. Its function is as follows. Zinc phosphodiesterase, which displays some tRNA 3'-processing endonuclease activity. Probably involved in tRNA maturation, by removing a 3'-trailer from precursor tRNA. The sequence is that of Ribonuclease Z from Streptococcus equi subsp. zooepidemicus (strain H70).